Here is a 183-residue protein sequence, read N- to C-terminus: Photosystem I assembly protein Ycf4 (183 aa).

2 helical membrane passes run 21 to 43 and 63 to 85; these read YIWG…SSYL and LVMC…LILW.

This sequence belongs to the Ycf4 family.

The protein localises to the plastid. It is found in the chloroplast thylakoid membrane. In terms of biological role, seems to be required for the assembly of the photosystem I complex. This chain is Photosystem I assembly protein Ycf4, found in Chlorella vulgaris (Green alga).